A 177-amino-acid polypeptide reads, in one-letter code: Ribosome maturation factor RimM (177 aa).

The PRC barrel domain maps to 101-174 (EGEFHLLDLV…WLLLTPPPGL (74 aa)).

Belongs to the RimM family. As to quaternary structure, binds ribosomal protein uS19.

It localises to the cytoplasm. In terms of biological role, an accessory protein needed during the final step in the assembly of 30S ribosomal subunit, possibly for assembly of the head region. Essential for efficient processing of 16S rRNA. May be needed both before and after RbfA during the maturation of 16S rRNA. It has affinity for free ribosomal 30S subunits but not for 70S ribosomes. The protein is Ribosome maturation factor RimM of Synechococcus sp. (strain CC9605).